The primary structure comprises 156 residues: Ribosomal RNA large subunit methyltransferase H (156 aa).

Residues Leu-73, Gly-104, and 123–128 (LSPLTL) each bind S-adenosyl-L-methionine.

Belongs to the RNA methyltransferase RlmH family. Homodimer.

The protein localises to the cytoplasm. It carries out the reaction pseudouridine(1915) in 23S rRNA + S-adenosyl-L-methionine = N(3)-methylpseudouridine(1915) in 23S rRNA + S-adenosyl-L-homocysteine + H(+). Specifically methylates the pseudouridine at position 1915 (m3Psi1915) in 23S rRNA. In Marinobacter nauticus (strain ATCC 700491 / DSM 11845 / VT8) (Marinobacter aquaeolei), this protein is Ribosomal RNA large subunit methyltransferase H.